The sequence spans 366 residues: Chorismate synthase (366 aa).

NADP(+)-binding residues include Arg48 and Arg54. FMN-binding positions include 125 to 127 (RSS), 238 to 239 (NA), Gly278, 293 to 297 (KPTSS), and Arg319.

This sequence belongs to the chorismate synthase family. In terms of assembly, homotetramer. FMNH2 serves as cofactor.

It carries out the reaction 5-O-(1-carboxyvinyl)-3-phosphoshikimate = chorismate + phosphate. Its pathway is metabolic intermediate biosynthesis; chorismate biosynthesis; chorismate from D-erythrose 4-phosphate and phosphoenolpyruvate: step 7/7. Its function is as follows. Catalyzes the anti-1,4-elimination of the C-3 phosphate and the C-6 proR hydrogen from 5-enolpyruvylshikimate-3-phosphate (EPSP) to yield chorismate, which is the branch point compound that serves as the starting substrate for the three terminal pathways of aromatic amino acid biosynthesis. This reaction introduces a second double bond into the aromatic ring system. This is Chorismate synthase from Burkholderia cenocepacia (strain HI2424).